The chain runs to 429 residues: D-galactonate dehydratase family member Caci_4410 (429 aa).

Positions M1–T22 are disordered. D233 contacts Mg(2+). A D-arabinonate-binding site is contributed by H235. Residues E259 and E285 each contribute to the Mg(2+) site. Residues E285, R306, H335, and E362 each coordinate D-arabinonate.

It belongs to the mandelate racemase/muconate lactonizing enzyme family. GalD subfamily.

In terms of biological role, has no detectable activity with D-mannonate and with a panel of 70 other acid sugars (in vitro), in spite of the conservation of the residues that are expected to be important for catalytic activity and cofactor binding. May have evolved a divergent function. In Catenulispora acidiphila (strain DSM 44928 / JCM 14897 / NBRC 102108 / NRRL B-24433 / ID139908), this protein is D-galactonate dehydratase family member Caci_4410.